Here is a 354-residue protein sequence, read N- to C-terminus: MLFNLKNLYRITKLTQNSKHLPRHFCRGPPNQMNVCLKGRDLLTLQNYTADELKYLLWVASDLKQRIKDKGEYLPLMQGKSLAMIFEKRSTRTRLSAETGFALLGGHSSFLTKQDIHLGTNESLTDTARVLSSMTNAILARVYKHNDLDLMTKEATIPVINGLSDLYHPLQILADYLTLQEHYGGLNGLTIAWIGDGNNVLHSIMTSAAKLGMHLRIATPKGFEPDLRITKVTEQYSKEYGTRLLLTTDPLEAANGANVLVTDTWISMGQEEEKRRRLKAFQGYQITMQTVQSAASNWTFLHCLPRKPEEVDDEVFYSPRSLVFQEAENRKWTIMAVMVSLLTDYSPQLQMPTF.

Residues 1-32 (MLFNLKNLYRITKLTQNSKHLPRHFCRGPPNQ) constitute a mitochondrion transit peptide. Carbamoyl phosphate-binding positions include 90–94 (STRTR), Arg-141, and His-168. Arg-141 contacts L-ornithine. L-ornithine-binding positions include Asn-199, 263–267 (DTWIS), 302–305 (HCLP), and Arg-330. The active site involves Cys-303. Arg-330 is a binding site for carbamoyl phosphate.

The protein belongs to the aspartate/ornithine carbamoyltransferase superfamily. OTCase family. In terms of assembly, homotrimer. Cleavage of the precursor form to the active form occurs only in the kidney. Expressed in kidney, brain, heart, liver, pancreas, gizzard, small intestine and breast muscle. More abundant in mitochondrion-rich organs (heart, liver and brain) than in other organs. Activity is only detected in the kidney.

It localises to the mitochondrion matrix. The enzyme catalyses carbamoyl phosphate + L-ornithine = L-citrulline + phosphate + H(+). Its pathway is nitrogen metabolism; urea cycle; L-citrulline from L-ornithine and carbamoyl phosphate: step 1/1. With respect to regulation, inhibition by ornithine increases at higher pH. Functionally, catalyzes the second step of the urea cycle, the condensation of carbamoyl phosphate with L-ornithine to form L-citrulline. The urea cycle ensures the detoxification of ammonia by converting it to urea for excretion. The polypeptide is Ornithine transcarbamylase, mitochondrial (Gallus gallus (Chicken)).